We begin with the raw amino-acid sequence, 255 residues long: Tumor necrosis factor receptor superfamily member 9 (255 aa).

The first 23 residues, 1–23 (MGNSCYNIVATLLLVLNFERTRS), serve as a signal peptide directing secretion. TNFR-Cys repeat units lie at residues 24–45 (LQDP…NQIC), 47–86 (PCPP…NAEC), 87–118 (DCTP…KGCK), and 119–159 (DCCF…VVCG). At 24 to 186 (LQDPCSNCPA…PAREPGHSPQ (163 aa)) the chain is on the extracellular side. 9 disulfide bridges follow: Cys-28/Cys-37, Cys-31/Cys-45, Cys-48/Cys-62, Cys-65/Cys-78, Cys-68/Cys-86, Cys-88/Cys-94, Cys-99/Cys-106, Cys-102/Cys-117, and Cys-121/Cys-133. N-linked (GlcNAc...) asparagine glycans are attached at residues Asn-138 and Asn-149. Cys-139 and Cys-158 are disulfide-bonded. Residues 161–180 (SPADLSPGASSVTPPAPARE) form a disordered region. A helical transmembrane segment spans residues 187–213 (IISFFLALTSTALLFLLFFLTLRFSVV). At 214 to 255 (KRGRKKLLYIFKQPFMRPVQTTQEEDGCSCRFPEEEEGGCEL) the chain is on the cytoplasmic side. The interval 214-255 (KRGRKKLLYIFKQPFMRPVQTTQEEDGCSCRFPEEEEGGCEL) is interaction with LRR-1.

Predominantly homodimeric, but may also exist as a monomer. Interacts with TRAF1, TRAF2 and TRAF3. Interacts with LRR-repeat protein 1/LRR-1. Expressed on the surface of activated T-cells.

It is found in the cell membrane. Its function is as follows. Receptor for TNFSF9/4-1BBL. Conveys a signal that enhances CD8(+) T-cell survival, cytotoxicity, and mitochondrial activity, thereby promoting immunity against viruses and tumors. The polypeptide is Tumor necrosis factor receptor superfamily member 9 (TNFRSF9) (Homo sapiens (Human)).